A 179-amino-acid chain; its full sequence is Large ribosomal subunit protein uL6 (179 aa).

It belongs to the universal ribosomal protein uL6 family. As to quaternary structure, part of the 50S ribosomal subunit.

In terms of biological role, this protein binds to the 23S rRNA, and is important in its secondary structure. It is located near the subunit interface in the base of the L7/L12 stalk, and near the tRNA binding site of the peptidyltransferase center. The sequence is that of Large ribosomal subunit protein uL6 from Mycobacterium avium (strain 104).